Here is a 271-residue protein sequence, read N- to C-terminus: Tetraspanin-11 (271 aa).

At 1–7 (MFRVSNF) the chain is on the cytoplasmic side. The chain crosses the membrane as a helical span at residues 8 to 28 (MVGLANTLVMLVGASAIGYSI). Topologically, residues 29–44 (YMFVHQGVTDCESAIR) are extracellular. Residues 45 to 65 (IPLLTTGLILFLVSLLGVIGS) form a helical membrane-spanning segment. Topologically, residues 66–76 (CFKENLAMVSY) are cytoplasmic. A helical membrane pass occupies residues 77-97 (LIILFGGIVALMIFSIFLFFV). At 98-236 (TNKGAGRVVS…LANIREKWRN (139 aa)) the chain is on the extracellular side. N-linked (GlcNAc...) asparagine glycans are attached at residues N185 and N195. Residues 237-257 (LLVFNICLLILLITVYSCGCC) traverse the membrane as a helical segment. At 258–271 (ARRNNRTARKSDSV) the chain is on the cytoplasmic side.

The protein belongs to the tetraspanin (TM4SF) family.

It is found in the membrane. Functionally, may be involved in the regulation of cell differentiation. In Arabidopsis thaliana (Mouse-ear cress), this protein is Tetraspanin-11 (TET11).